The sequence spans 316 residues: Lipoyl synthase (316 aa).

The [4Fe-4S] cluster site is built by Cys-66, Cys-71, Cys-77, Cys-92, Cys-96, Cys-99, and Ser-306. The Radical SAM core domain maps to 78–295 (YSQQTATFMV…ADIAKSMGFK (218 aa)).

This sequence belongs to the radical SAM superfamily. Lipoyl synthase family. Requires [4Fe-4S] cluster as cofactor.

It localises to the cytoplasm. The enzyme catalyses [[Fe-S] cluster scaffold protein carrying a second [4Fe-4S](2+) cluster] + N(6)-octanoyl-L-lysyl-[protein] + 2 oxidized [2Fe-2S]-[ferredoxin] + 2 S-adenosyl-L-methionine + 4 H(+) = [[Fe-S] cluster scaffold protein] + N(6)-[(R)-dihydrolipoyl]-L-lysyl-[protein] + 4 Fe(3+) + 2 hydrogen sulfide + 2 5'-deoxyadenosine + 2 L-methionine + 2 reduced [2Fe-2S]-[ferredoxin]. Its pathway is protein modification; protein lipoylation via endogenous pathway; protein N(6)-(lipoyl)lysine from octanoyl-[acyl-carrier-protein]: step 2/2. Its function is as follows. Catalyzes the radical-mediated insertion of two sulfur atoms into the C-6 and C-8 positions of the octanoyl moiety bound to the lipoyl domains of lipoate-dependent enzymes, thereby converting the octanoylated domains into lipoylated derivatives. This chain is Lipoyl synthase, found in Rhodopirellula baltica (strain DSM 10527 / NCIMB 13988 / SH1).